The primary structure comprises 360 residues: Epoxide hydrolase 3 (360 aa).

Residues 22–42 (AFMWSLVFSVALVAAAVYGCI) form a helical membrane-spanning segment. The active-site Nucleophile is the Asp173. The active-site Proton donor is Tyr281. His337 (proton acceptor) is an active-site residue.

The protein belongs to the AB hydrolase superfamily. Epoxide hydrolase family.

Its subcellular location is the microsome membrane. The catalysed reaction is an epoxide + H2O = an ethanediol. It carries out the reaction 9,10-epoxyoctadecanoate + H2O = 9,10-dihydroxyoctadecanoate. The enzyme catalyses 9,10-epoxy-(12Z)-octadecenoate + H2O = 9,10-dihydroxy-(12Z)-octadecenoate. It catalyses the reaction 8,9-epoxy-(5Z,11Z,14Z)-eicosatrienoate + H2O = 8,9-dihydroxy-(5Z,11Z,14Z)-eicosatrienoate. The catalysed reaction is 11,12-epoxy-(5Z,8Z,14Z)-eicosatrienoate + H2O = 11,12-dihydroxy-(5Z,8Z,14Z)-eicosatrienoate. It carries out the reaction 14,15-epoxy-(5Z,8Z,11Z)-eicosatrienoate + H2O = 14,15-dihydroxy-(5Z,8Z,11Z)-eicosatrienoate. Its activity is regulated as follows. Inhibited by 1-(1-acetylpiperidin-4-yl)-3-(4-(trifl uoromethoxy)phenyl)urea (TPAU), 1-cyclohexyl-3-dodecylurea (CDU), 12-(3-adamantan-1-yl-ureido)-dodecanoic acid (AUDA), 1-((3S, 5S, 7S)-adamantan-1-yl)-3-(5-(2-(2-ethoxyethoxy) ethoxy)pentyl)urea (AEPU) and to a lesser extent by 8-(3-((3S, 5S, 7S)-adamantan-1-yl)ureido) octanoic acid (AUOA). In terms of biological role, catalyzes the hydrolysis of epoxide-containing fatty acids. Active in vitro against epoxyeicosatrienoic acids (EETs) including 8,9-EET, 9,10-EET, 11,12-EET and 14,15-EET and leukotoxin. The chain is Epoxide hydrolase 3 (EPHX3) from Homo sapiens (Human).